The sequence spans 306 residues: D-alanine--D-alanine ligase (306 aa).

An ATP-grasp domain is found at 101 to 303; that stretch reads KLLWQGAGLP…FSQLVVRILE (203 aa). Residue 134–189 participates in ATP binding; that stretch reads ISALGLPLIVKPSREGSSVGMTKVVEENALQGALSLAFQHDDEILIEKWLCGPEFT. Residues aspartate 257, glutamate 270, and asparagine 272 each coordinate Mg(2+).

This sequence belongs to the D-alanine--D-alanine ligase family. The cofactor is Mg(2+). Requires Mn(2+) as cofactor.

Its subcellular location is the cytoplasm. The enzyme catalyses 2 D-alanine + ATP = D-alanyl-D-alanine + ADP + phosphate + H(+). The protein operates within cell wall biogenesis; peptidoglycan biosynthesis. Functionally, cell wall formation. The sequence is that of D-alanine--D-alanine ligase from Salmonella paratyphi A (strain ATCC 9150 / SARB42).